A 71-amino-acid polypeptide reads, in one-letter code: Protein Tlp homolog (71 aa).

Residues E30–I56 form a disordered region. The segment covering R39 to I56 has biased composition (basic and acidic residues).

This sequence belongs to the Tlp family.

This Desulforamulus reducens (strain ATCC BAA-1160 / DSM 100696 / MI-1) (Desulfotomaculum reducens) protein is Protein Tlp homolog.